A 110-amino-acid polypeptide reads, in one-letter code: Probable ribonuclease HepT (110 aa).

Active-site residues include Arg-75 and His-80. The short motif at 75-82 is the RX(4)HXY motif element; the sequence is RDKLIHAY. The residue at position 82 (Tyr-82) is an O-di-AMP-tyrosine.

It belongs to the HepT RNase toxin family. In terms of processing, modified by cognate antitoxin MntA; probably at least 2 successive AMPylation events occur on Tyr-82.

Functionally, toxic component of a type VII toxin-antitoxin (TA) system. Overexpression in E.coli inhibits cell growth. Neutralized by cognate antitoxin MntA. Neutralization is probably due to AMPylation by MntA. Probably an RNAase. In Thermococcus cleftensis (strain DSM 27260 / KACC 17922 / CL1), this protein is Probable ribonuclease HepT.